The following is a 66-amino-acid chain: MGMRMMFTVFLLVVLTTTVVSSTSVRASDGRNAAADNRASDLIAQIVRRGCCSHPACNVNNPHICG.

The N-terminal stretch at 1 to 21 is a signal peptide; the sequence is MGMRMMFTVFLLVVLTTTVVS. Positions 22–49 are excised as a propeptide; that stretch reads STSVRASDGRNAAADNRASDLIAQIVRR. 2 cysteine pairs are disulfide-bonded: C51–C57 and C52–C65. The segment at 53–55 is ser-Xaa-Pro motif, crucial for potent interaction with nAChR; sequence SHP. Residue C65 is modified to Cysteine amide.

Belongs to the conotoxin A superfamily. Expressed by the venom duct.

The protein localises to the secreted. Alpha-conotoxins act on postsynaptic membranes, they bind to the nicotinic acetylcholine receptors (nAChR) and thus inhibit them. This toxin potently inhibits alpha-3 containing subunit nAChR. It inhibits alpha-3-beta-2/CHRNA3-CHRNB2 (IC(50)=10.7-33 nM (rat)/132.4-704.1 nM (human)) and alpha-3-beta-4/CHRNA3-CHRNB4 (IC(50)=47.3-97 nM (rat)/52.1 nM (human)). It also inhibits alpha-7/CHRNA7 nAChR with IC(50)=103-210 nM (human)/41-61.2 nM (rat) nAChRs. It is more potent on alpha-3-beta-2 receptors in human than in rat, due to a variation (Pro vs Gln) in alpha-3 subunit in these orthologs. Conversely, does not show species-specific differences in sensitivity at the alpha-3-beta-4 receptor. In Conus regius (Crown cone), this protein is Alpha-conotoxin RegIIA.